The chain runs to 335 residues: uncharacterized protein (335 aa).

An N-terminal signal peptide occupies residues 1–21; that stretch reads MDKKARAHTVIVCLVGALSLA. A lipid anchor (N-palmitoyl cysteine) is attached at C22. C22 carries the S-diacylglycerol cysteine lipid modification.

The protein resides in the cell membrane. This is an uncharacterized protein from Treponema pallidum (strain Nichols).